The primary structure comprises 720 residues: Engulfment and cell motility protein 2 (720 aa).

Residue Tyr48 is modified to Phosphotyrosine. In terms of domain architecture, ELMO spans 310–484 (QAQRDIIFEL…QVVREQITRA (175 aa)). At Ser503 the chain carries Phosphoserine. The 122-residue stretch at 553 to 674 (SSFRKIGNRR…LLGKDMSSEL (122 aa)) folds into the PH domain. Positions 700-707 (PEAPPPVP) match the SH3-binding motif. Tyr717 bears the Phosphotyrosine mark.

As to quaternary structure, interacts directly with the SH3-domain of DOCK1 via its SH3-binding site. Probably forms a heterotrimeric complex with DOCK1 and RAC1. Interacts with ARHGEF16, DOCK4 and EPHA2; mediates activation of RAC1 by EPHA2. Interacts with ADGRB3. Interacts with AUTS2; the interaction is direct.

It localises to the cytoplasm. The protein resides in the cytosol. It is found in the membrane. In terms of biological role, involved in cytoskeletal rearrangements required for phagocytosis of apoptotic cells and cell motility. Acts in association with DOCK1 and CRK. Was initially proposed to be required in complex with DOCK1 to activate Rac Rho small GTPases. May enhance the guanine nucleotide exchange factor (GEF) activity of DOCK1. The polypeptide is Engulfment and cell motility protein 2 (ELMO2) (Bos taurus (Bovine)).